The sequence spans 515 residues: Carboxyl-terminal-processing peptidase 2, chloroplastic (515 aa).

One can recognise a PDZ domain in the interval 198 to 286 (FKSLRSGTQG…SAVELAIRSG (89 aa)). Residues S417 and K442 each act as charge relay system in the active site.

This sequence belongs to the peptidase S41A family.

Its subcellular location is the plastid. The protein localises to the chloroplast thylakoid lumen. The enzyme catalyses The enzyme shows specific recognition of a C-terminal tripeptide, Xaa-Yaa-Zaa, in which Xaa is preferably Ala or Leu, Yaa is preferably Ala or Tyr, and Zaa is preferably Ala, but then cleaves at a variable distance from the C-terminus. A typical cleavage is -Ala-Ala-|-Arg-Ala-Ala-Lys-Glu-Asn-Tyr-Ala-Leu-Ala-Ala.. Protease involved in the C-terminal processing of the chloroplastic D1 protein of photosystem II. This proteolytic processing is necessary to allow the light-driven assembly of the tetranuclear manganese cluster, which is responsible for photosynthetic water oxidation. The chain is Carboxyl-terminal-processing peptidase 2, chloroplastic (CTPA2) from Arabidopsis thaliana (Mouse-ear cress).